The primary structure comprises 444 residues: Phosphoglucosamine mutase (444 aa).

The active-site Phosphoserine intermediate is serine 102. Serine 102, aspartate 241, aspartate 243, and aspartate 245 together coordinate Mg(2+). A Phosphoserine modification is found at serine 102.

Belongs to the phosphohexose mutase family. The cofactor is Mg(2+). Post-translationally, activated by phosphorylation.

It carries out the reaction alpha-D-glucosamine 1-phosphate = D-glucosamine 6-phosphate. Functionally, catalyzes the conversion of glucosamine-6-phosphate to glucosamine-1-phosphate. The chain is Phosphoglucosamine mutase from Actinobacillus pleuropneumoniae serotype 7 (strain AP76).